Here is a 238-residue protein sequence, read N- to C-terminus: Protein shisa-3 homolog (238 aa).

An N-terminal signal peptide occupies residues 1–21 (MRALLALCLLLGWLRWGPAGA). At 22-98 (QQSGEYCHGW…GITAQPVYVP (77 aa)) the chain is on the lumenal side. The chain crosses the membrane as a helical span at residues 99–119 (FLIVGSIFIAFIILGSVVAIY). Over 120-238 (CCTCLRPKEP…GKSCPDFSSS (119 aa)) the chain is Cytoplasmic. The tract at residues 151-173 (TSTSPRAPSRQSSTATSSSSTGG) is disordered. Over residues 159–173 (SRQSSTATSSSSTGG) the composition is skewed to low complexity.

Belongs to the shisa family.

It is found in the endoplasmic reticulum membrane. Plays an essential role in the maturation of presomitic mesoderm cells by individual attenuation of both FGF and WNT signaling. The polypeptide is Protein shisa-3 homolog (SHISA3) (Homo sapiens (Human)).